Consider the following 152-residue polypeptide: Large ribosomal subunit protein uL13 (152 aa).

Positions 129 to 152 (EHPHEAQSPEVLDVKSMNKKNTRS) are disordered.

It belongs to the universal ribosomal protein uL13 family. Part of the 50S ribosomal subunit.

This protein is one of the early assembly proteins of the 50S ribosomal subunit, although it is not seen to bind rRNA by itself. It is important during the early stages of 50S assembly. This chain is Large ribosomal subunit protein uL13, found in Ruegeria sp. (strain TM1040) (Silicibacter sp.).